A 162-amino-acid polypeptide reads, in one-letter code: Phosphopantetheine adenylyltransferase (162 aa).

Thr-10 contributes to the substrate binding site. ATP-binding positions include 10-11 and His-18; that span reads TF. Substrate-binding residues include Lys-42, Met-74, and Arg-88. ATP is bound by residues 89–91, Glu-99, and 124–130; these read GLR and YAFLSST.

This sequence belongs to the bacterial CoaD family. Homohexamer. Requires Mg(2+) as cofactor.

The protein localises to the cytoplasm. The catalysed reaction is (R)-4'-phosphopantetheine + ATP + H(+) = 3'-dephospho-CoA + diphosphate. The protein operates within cofactor biosynthesis; coenzyme A biosynthesis; CoA from (R)-pantothenate: step 4/5. In terms of biological role, reversibly transfers an adenylyl group from ATP to 4'-phosphopantetheine, yielding dephospho-CoA (dPCoA) and pyrophosphate. The polypeptide is Phosphopantetheine adenylyltransferase (Aliivibrio fischeri (strain ATCC 700601 / ES114) (Vibrio fischeri)).